Here is a 791-residue protein sequence, read N- to C-terminus: MDNKVSASPRGSYRKFLEHLSGAGKAIGVLTSGGDAQGMNAAVRAVVRMGIYVGAKVYFIYEGYQGMVDGGSNIVEANWESVSSILQVGGTIIGSARSKAFRTREGRLKAACNLIHRGITNLCVIGGSGSLTGANIFRMEWSGLLEELAQDGKIDNEAVQKYAYLNVVGMVGSIDNDFCGTDMTIGTDSACHRIIEVIDAIMTTAQSHQRTFVLEVMGRHCGYLALVSALACGADWVFLPESPPEEGWEEQMCVKLSENRAQKKRLNIIIVAEGAIDTLNRPITSEKIKELVVTQLGYDTRVTILGHVQRGGTPSAFDRILASRMGVEAVLALLEATPETPACVVSLSGNHAVRLPLVECVQMTQEVQKAMDERRFKDAVQLRGRSFENNLNTYKRLAIKLPDDKIQKSNCNVAVINVGAPAAGMNAAVRSAVRVGIADGHKMFAVYDGFDGFAKGQIKEIRWGDVGGWTGQGGSILGTKRILPGKYLEEIATQIRTHNINAILIIGGFEAYLGLLELSAAREKHEEFCVPMVMVPATVSNNVPGSDFSIGADTALNTITDTCDRIKQSASGTKRRVFIIETMGGYCGYLANMGGLAAGADAAYIFEEPFDIRDLQSNVEHLTEKMKTTIQRGLVLRNESCSENYTTDFIYQLYSEEGRGVFDCRKNVLGHMQQGGAPSPFDRNFGTKISARAMQWITTKLKESPGKGKRFVSDDSICVLGISKRNVLFQPVAELKNETDFEHRIPKEQWWLKLRPLMKILAKYKTSYDVSDSGQLVPVRHRGGPEEPAAI.

Met1 is modified (N-acetylmethionine). The tract at residues 1-399 (MDNKVSASPR…NLNTYKRLAI (399 aa)) is N-terminal catalytic PFK domain 1. Ser6 carries the post-translational modification Phosphoserine. Residue Ser12 is modified to Phosphoserine; by PKA. Residue Ser21 is modified to Phosphoserine. Residues Gly34, 97 to 98 (RS), and 127 to 130 (GSGS) contribute to the ATP site. Ser142 carries the post-translational modification Phosphoserine. Substrate contacts are provided by residues 173 to 175 (SID), Arg210, 217 to 219 (MGR), Glu273, Arg301, and 307 to 310 (HVQR). Residue Asp175 is the Proton acceptor of the active site. The residue at position 386 (Ser386) is a Phosphoserine. Residue Lys395 is modified to N6-acetyllysine. An interdomain linker region spans residues 400–411 (KLPDDKIQKSNC). The tract at residues 412–791 (NVAVINVGAP…RGGPEEPAAI (380 aa)) is C-terminal regulatory PFK domain 2. Arg481 provides a ligand contact to beta-D-fructose 2,6-bisphosphate. The residue at position 486 (Lys486) is an N6-acetyllysine. Beta-D-fructose 2,6-bisphosphate-binding positions include 538–542 (TVSNN), Arg576, 583–585 (MGG), and Glu639. An O-linked (GlcNAc) serine glycan is attached at Ser540. Position 651 is a phosphotyrosine (Tyr651). Beta-D-fructose 2,6-bisphosphate is bound by residues Arg665 and 671–674 (HMQQ). An N6-acetyllysine modification is found at Lys688. Arg744 lines the beta-D-fructose 2,6-bisphosphate pocket.

Belongs to the phosphofructokinase type A (PFKA) family. ATP-dependent PFK group I subfamily. Eukaryotic two domain clade 'E' sub-subfamily. Homo- and heterotetramers. Phosphofructokinase (PFK) enzyme functions as a tetramer composed of different combinations of 3 types of subunits, called PFKM (M), PFKL (L) and PFKP (P). The composition of the PFK tetramer differs according to the tissue type it is present in. The kinetic and regulatory properties of the tetrameric enzyme are dependent on the subunit composition, hence can vary across tissues. Interacts with ATG4B; promoting phosphorylation of ATG4B. Mg(2+) is required as a cofactor. GlcNAcylation decreases enzyme activity. Post-translationally, phosphorylation at Ser-386 promotes interaction with ATG4B.

Its subcellular location is the cytoplasm. The catalysed reaction is beta-D-fructose 6-phosphate + ATP = beta-D-fructose 1,6-bisphosphate + ADP + H(+). It participates in carbohydrate degradation; glycolysis; D-glyceraldehyde 3-phosphate and glycerone phosphate from D-glucose: step 3/4. With respect to regulation, allosterically activated by ADP, AMP, or fructose 2,6-bisphosphate, and allosterically inhibited by ATP or citrate. Functionally, catalyzes the phosphorylation of D-fructose 6-phosphate to fructose 1,6-bisphosphate by ATP, the first committing step of glycolysis. The chain is ATP-dependent 6-phosphofructokinase, platelet type (PFKP) from Oryctolagus cuniculus (Rabbit).